Here is a 1282-residue protein sequence, read N- to C-terminus: ATP-dependent helicase/nuclease subunit A (1282 aa).

A UvrD-like helicase ATP-binding domain is found at 10–481 (SKWTDSQRQV…IELQENFRSS (472 aa)). ATP is bound at residue 31–38 (AGAGAGKT). The UvrD-like helicase C-terminal domain occupies 516–820 (KPRELYLNED…RLMSIHKSKG (305 aa)).

This sequence belongs to the helicase family. AddA subfamily. Heterodimer of AddA and AddB/RexB. Mg(2+) serves as cofactor.

The enzyme catalyses Couples ATP hydrolysis with the unwinding of duplex DNA by translocating in the 3'-5' direction.. It carries out the reaction ATP + H2O = ADP + phosphate + H(+). Its function is as follows. The heterodimer acts as both an ATP-dependent DNA helicase and an ATP-dependent, dual-direction single-stranded exonuclease. Recognizes the chi site generating a DNA molecule suitable for the initiation of homologous recombination. The AddA nuclease domain is required for chi fragment generation; this subunit has the helicase and 3' -&gt; 5' nuclease activities. The polypeptide is ATP-dependent helicase/nuclease subunit A (Natranaerobius thermophilus (strain ATCC BAA-1301 / DSM 18059 / JW/NM-WN-LF)).